Consider the following 890-residue polypeptide: Translation initiation factor IF-2 (890 aa).

The disordered stretch occupies residues 45-304 (LIDHLNQKNS…LQQGFQKPAQ (260 aa)). Over residues 67 to 81 (STLNIPGTGGKSKSV) the composition is skewed to polar residues. Basic and acidic residues predominate over residues 92–217 (VKRDPQEAER…RMAEENKWTD (126 aa)). The segment covering 252 to 266 (GRGRNAKAARPKKGN) has biased composition (basic residues). A compositionally biased stretch (basic and acidic residues) spans 267-280 (KHAESKADREEARA). Residues 389-558 (PRAPVVTIMG…LLQAEVLELK (170 aa)) form the tr-type G domain. Residues 398-405 (GHVDHGKT) are G1. Position 398-405 (398-405 (GHVDHGKT)) interacts with GTP. Positions 423–427 (GITQH) are G2. The segment at 444 to 447 (DTPG) is G3. GTP contacts are provided by residues 444 to 448 (DTPGH) and 498 to 501 (NKID). Positions 498–501 (NKID) are G4. The tract at residues 534–536 (SAK) is G5. N6-acetyllysine is present on K808.

Belongs to the TRAFAC class translation factor GTPase superfamily. Classic translation factor GTPase family. IF-2 subfamily.

The protein localises to the cytoplasm. Functionally, one of the essential components for the initiation of protein synthesis. Protects formylmethionyl-tRNA from spontaneous hydrolysis and promotes its binding to the 30S ribosomal subunits. Also involved in the hydrolysis of GTP during the formation of the 70S ribosomal complex. The sequence is that of Translation initiation factor IF-2 from Shigella sonnei (strain Ss046).